A 507-amino-acid polypeptide reads, in one-letter code: MVTIRAEEISNIIRERIEQYNREVKIVNTGTVLQVGDGIARIHGLDEVMAGELVEFAEGTIGIALNLESNNVGVVLMGDGLMIQEGSSVKATGRIAQIPVSEAYLGRVINALAKPIDGRGEILASEYRLIESPAPGIISRRSVYEPLQTGLIAIDSMIPIGRGQRELIIGDRQTGKTAVATDTILNQKGQNVICVYVAIGQKASSVAQVVTTFQERGAMEYTIVVAETADSPATLQYLAPYTGAALAEYFMYRQRHTLIIYDDLSKQAQAYRQMSLLLRRPPGREAYPGDVFYLHSRLLERAAKPSSRLGEGSMTALPIVETQSGDVSAYIPTNVISITDGQIFLSADLFNAGIRPAINVGISVSRVGSAAQIKAMKQVAGKLKLELAQFAELEAFAQFASDLDKATQNQLARGQRLRELLKQSQSSPLAVDEQIVTIYTGTNGYLDQLEIGQVKKFIVQLRTHLRTNKPQFQEIISSTKVFTEQAEALLKEAIQEQMELFLLQEQT.

Position 170-177 (170-177 (GDRQTGKT)) interacts with ATP.

The protein belongs to the ATPase alpha/beta chains family. As to quaternary structure, F-type ATPases have 2 components, CF(1) - the catalytic core - and CF(0) - the membrane proton channel. CF(1) has five subunits: alpha(3), beta(3), gamma(1), delta(1), epsilon(1). CF(0) has four main subunits: a, b, b' and c.

The protein localises to the plastid. It localises to the chloroplast thylakoid membrane. It carries out the reaction ATP + H2O + 4 H(+)(in) = ADP + phosphate + 5 H(+)(out). Its function is as follows. Produces ATP from ADP in the presence of a proton gradient across the membrane. The alpha chain is a regulatory subunit. The sequence is that of ATP synthase subunit alpha, chloroplastic from Nymphaea alba (White water-lily).